The sequence spans 436 residues: UPF0597 protein YhaM (436 aa).

The protein belongs to the UPF0597 family.

In Escherichia coli O45:K1 (strain S88 / ExPEC), this protein is UPF0597 protein YhaM.